Reading from the N-terminus, the 570-residue chain is Methionine--tRNA ligase (570 aa).

Positions 11-21 (PYVQTVPHLGN) match the 'HIGH' region motif. Zn(2+) contacts are provided by C143, C146, C156, and C159. The 'KMSKS' region signature appears at 333 to 337 (KFSKS). ATP is bound at residue K336.

It belongs to the class-I aminoacyl-tRNA synthetase family. MetG type 1 subfamily. Requires Zn(2+) as cofactor.

The protein localises to the cytoplasm. The enzyme catalyses tRNA(Met) + L-methionine + ATP = L-methionyl-tRNA(Met) + AMP + diphosphate. Is required not only for elongation of protein synthesis but also for the initiation of all mRNA translation through initiator tRNA(fMet) aminoacylation. The chain is Methionine--tRNA ligase from Pyrobaculum arsenaticum (strain DSM 13514 / JCM 11321 / PZ6).